The chain runs to 282 residues: 40S small subunit processome assembly factor 1 (282 aa).

Disordered regions lie at residues Tyr-27–Pro-98 and Phe-121–Lys-143. Over residues Lys-48–Ala-59 the composition is skewed to basic and acidic residues. Residues Ser-67 and Ser-75 each carry the phosphoserine modification. The span at Ser-89–Pro-98 shows a compositional bias: low complexity. The span at Lys-131–Lys-143 shows a compositional bias: basic and acidic residues. The residue at position 173 (Lys-173) is an N6-acetyllysine. The segment covering Glu-208–Phe-226 has biased composition (basic and acidic residues). The tract at residues Glu-208 to Ala-254 is disordered. Ser-268 carries the post-translational modification Phosphoserine.

As to quaternary structure, part of the small subunit (SSU) processome, composed of more than 70 proteins and the RNA chaperone small nucleolar RNA (snoRNA) U3.

It is found in the chromosome. The protein localises to the nucleus. The protein resides in the nucleolus. Part of the small subunit (SSU) processome, first precursor of the small eukaryotic ribosomal subunit. During the assembly of the SSU processome in the nucleolus, many ribosome biogenesis factors, an RNA chaperone and ribosomal proteins associate with the nascent pre-rRNA and work in concert to generate RNA folding, modifications, rearrangements and cleavage as well as targeted degradation of pre-ribosomal RNA by the RNA exosome. Prevents helicase DHX37 to be recruited before post-A1 state. This Rattus norvegicus (Rat) protein is 40S small subunit processome assembly factor 1.